The sequence spans 161 residues: MDFRIGQGYDVHQLVPGRPLIIGGVTIPYERGLLGHSDADVLLHAITDALFGAAALGDIGRHFSDTDAAFKGADSRVLLRECAARVKAAGFTIQNVDSTVIAQAPKLAPHIDGMRANIAADLGLPLDRVNVKAKTNEKLGYLGRGDGIEAQAAALLVKEGA.

A divalent metal cation is bound by residues D10 and H12. Residues 10–12 and 36–37 each bind 4-CDP-2-C-methyl-D-erythritol 2-phosphate; these read DVH and HS. H44 is an a divalent metal cation binding site. Residues 58-60, 63-67, and R144 each bind 4-CDP-2-C-methyl-D-erythritol 2-phosphate; these read DIG and FSDTD.

It belongs to the IspF family. In terms of assembly, homotrimer. The cofactor is a divalent metal cation.

It carries out the reaction 4-CDP-2-C-methyl-D-erythritol 2-phosphate = 2-C-methyl-D-erythritol 2,4-cyclic diphosphate + CMP. It functions in the pathway isoprenoid biosynthesis; isopentenyl diphosphate biosynthesis via DXP pathway; isopentenyl diphosphate from 1-deoxy-D-xylulose 5-phosphate: step 4/6. Its function is as follows. Involved in the biosynthesis of isopentenyl diphosphate (IPP) and dimethylallyl diphosphate (DMAPP), two major building blocks of isoprenoid compounds. Catalyzes the conversion of 4-diphosphocytidyl-2-C-methyl-D-erythritol 2-phosphate (CDP-ME2P) to 2-C-methyl-D-erythritol 2,4-cyclodiphosphate (ME-CPP) with a corresponding release of cytidine 5-monophosphate (CMP). This Burkholderia ambifaria (strain ATCC BAA-244 / DSM 16087 / CCUG 44356 / LMG 19182 / AMMD) (Burkholderia cepacia (strain AMMD)) protein is 2-C-methyl-D-erythritol 2,4-cyclodiphosphate synthase.